Consider the following 87-residue polypeptide: CRISPR-associated endoribonuclease Cas2 (87 aa).

Asp8 lines the Mg(2+) pocket.

The protein belongs to the CRISPR-associated endoribonuclease Cas2 protein family. Homodimer, forms a heterotetramer with a Cas1 homodimer. Mg(2+) is required as a cofactor.

In terms of biological role, CRISPR (clustered regularly interspaced short palindromic repeat), is an adaptive immune system that provides protection against mobile genetic elements (viruses, transposable elements and conjugative plasmids). CRISPR clusters contain sequences complementary to antecedent mobile elements and target invading nucleic acids. CRISPR clusters are transcribed and processed into CRISPR RNA (crRNA). Functions as a ssRNA-specific endoribonuclease. Involved in the integration of spacer DNA into the CRISPR cassette. The polypeptide is CRISPR-associated endoribonuclease Cas2 (Frankia alni (strain DSM 45986 / CECT 9034 / ACN14a)).